Reading from the N-terminus, the 2562-residue chain is Zinc finger homeobox protein 2 (2562 aa).

The span at 1–13 shows a compositional bias: polar residues; that stretch reads MATLNSASPSGTV. Disordered regions lie at residues 1 to 88 and 337 to 410; these read MATL…PPKD and PSPP…DPPP. Over residues 56 to 73 the composition is skewed to basic and acidic residues; that stretch reads GGERLESGSDLDPPKEIG. 2 consecutive C2H2-type zinc fingers follow at residues 446–469 and 501–525; these read LKCP…REKH and YRCD…SDKH. Disordered stretches follow at residues 530–559, 603–651, and 669–705; these read QGFQ…EPKT, PPGL…PDKP, and RKFP…PSPD. Over residues 609 to 622 the composition is skewed to pro residues; the sequence is PGPPPPPGAAPTNP. Residues 690–704 show a composition bias toward polar residues; that stretch reads LLGSSSDGLPTSPSP. 3 consecutive C2H2-type zinc fingers follow at residues 752-776, 815-839, and 864-888; these read HRCK…TDKH, LRCN…GSAH, and YHCL…TPAH. The tract at residues 923 to 966 is disordered; the sequence is RLQTPGKASDTPLAQPPTSEKDAQNKTEQQASEVTEDRSGPPRD. The segment at 1003 to 1026 adopts a C2H2-type 6 zinc-finger fold; the sequence is YRCPLCQEQLVGRPALHFHLSHLH. Disordered stretches follow at residues 1058 to 1126 and 1140 to 1166; these read NPVE…PAPR and MSEE…HPLT. Pro residues-rich tracts occupy residues 1091–1101 and 1114–1124; these read SPDPPLEPPLA and DQPPSPAPSPA. 2 C2H2-type zinc fingers span residues 1185-1211 and 1242-1266; these read YKCT…SHLH and FKCT…SVLH. The span at 1278-1305 shows a compositional bias: basic and acidic residues; that stretch reads RAEGAERGQEEFKEGETEGEAGTEKKGP. A disordered region spans residues 1278–1313; that stretch reads RAEGAERGQEEFKEGETEGEAGTEKKGPDPGGFMSG. The C2H2-type 9 zinc-finger motif lies at 1474–1497; sequence LACGACGKLFSNMLILKTHEEHVH. The interval 1520 to 1584 is disordered; it reads LYPPPVEPPK…EGSRGSLPPA (65 aa). Residues 1521–1531 are compositionally biased toward pro residues; it reads YPPPVEPPKPP. The homeobox 1 DNA-binding region spans 1589–1648; it reads RRFSRTKFTEFQTQALQSFFETSAYPKDGEVERLASLLGLASRVVVVWFQNARQKARKNA. The segment at 1664–1687 adopts a C2H2-type 10; degenerate zinc-finger fold; sequence SGCRRCHATFACVFELVRHLKKCY. The segment at 1689–1760 is disordered; that stretch reads DQPPEEEEEA…EGKAPPSPPV (72 aa). A compositionally biased stretch (acidic residues) spans 1690-1713; that stretch reads QPPEEEEEAERGEEEEEVEEEEAE. Residues 1743-1752 show a composition bias toward basic and acidic residues; sequence TRPESKESEG. A C2H2-type 11 zinc finger spans residues 1761–1783; it reads YACDQCAASFPSQDLLTTHHRLH. Disordered regions lie at residues 1814-1853, 1907-1934, 1971-2057, 2114-2136, 2186-2210, 2263-2313, and 2391-2429; these read SGTS…KDKR, RKGQ…PAPF, PLPF…DSMG, KKAK…TSAA, PAPE…PLGA, QTAG…PNSS, and LQQP…LTGS. A DNA-binding region (homeobox 2) is located at residues 1851–1910; that stretch reads DKRLRTTILPEQLEILYRWYMQDSNPTRKMLDCISEEVGLKKRVVQVWFQNTRARERKGQ. Pro residues predominate over residues 1985–1996; sequence TPEPPPPLPPPA. Residues 2008 to 2037 are compositionally biased toward low complexity; that stretch reads KASPESEACSPSAGDLSDSSASSLAEPESP. Over residues 2038–2051 the composition is skewed to gly residues; sequence GAGGTSGGPGGGTG. The segment at residues 2058 to 2117 is a DNA-binding region (homeobox 3); sequence QRRYRTQMSSLQLKIMKACYEAYRTPTMQECEVLGEEIGLPKRVIQVWFQNARAKEKKAK. The segment covering 2188-2200 has biased composition (pro residues); it reads PETPLAPKGPPAT. The span at 2275 to 2286 shows a compositional bias: polar residues; sequence PVSNQTNSSTDP. Positions 2295–2305 are enriched in basic and acidic residues; sequence SGDKVSGERKP. Residues 2395-2411 are compositionally biased toward pro residues; it reads PQAPEPTATAPPKPPEL. Residues 2441–2461 form a C2H2-type 12; degenerate zinc finger; the sequence is YLCRQCKMAFDGEAPATAHQR. The C2H2-type 13 zinc finger occupies 2485-2509; the sequence is YHCLACEVLLSGREALASHLRSSAH. Disordered stretches follow at residues 2506–2525 and 2540–2562; these read SSAH…ITVT and EEAR…LLAL. Over residues 2553 to 2562 the composition is skewed to low complexity; it reads TTTTSTLLAL.

In terms of tissue distribution, expressed in brain (at protein level). Expressed at the highest levels in the pyramidal cell layer of the hippocampus, the suprachiasmatic nucleus, laterodorsal thalamic nucleus, lateral geniculate nucleus, substantia nigra pars compacta, and magnocellular part of the red nucleus (at protein level). Highly expressed in dorsal root ganglia. Expressed at lower levels in kidney, stomach, liver, heart and testis.

It is found in the nucleus. Transcriptional regulator that is critical for the regulation of pain perception and processing of noxious stimuli. The sequence is that of Zinc finger homeobox protein 2 from Mus musculus (Mouse).